The chain runs to 157 residues: NudC domain-containing protein 2 (157 aa).

Ser2 is modified (N-acetylserine). In terms of domain architecture, CS spans 14–104 (CGTPWGQWYQ…DAANCWTSLL (91 aa)). Positions 134–157 (FDFSGAEISGNYTKGGPDFSNLEK) are disordered. Ser142 carries the post-translational modification Phosphoserine. Tyr145 is subject to Phosphotyrosine.

In terms of assembly, interacts with LIS1.

The protein localises to the chromosome. It is found in the centromere. It localises to the kinetochore. Its subcellular location is the cytoplasm. The protein resides in the cytoskeleton. The protein localises to the microtubule organizing center. It is found in the centrosome. It localises to the spindle pole. Functionally, may regulate the LIS1/dynein pathway by stabilizing LIS1 with Hsp90 chaperone. This Homo sapiens (Human) protein is NudC domain-containing protein 2 (NUDCD2).